The primary structure comprises 1061 residues: E3 ubiquitin-protein ligase Smurf1 (1061 aa).

The region spanning 1 to 116 (MNKLDYPRRN…KGAGFQRLDL (116 aa)) is the C2 domain. 2 disordered regions span residues 143–176 (SGNP…WEER) and 188–496 (HATK…SGQR). Residues 167–200 (DSLPEGWEERRTDNGRVYYVNHATKSTQWDRPRQ) form the WW 1 domain. Polar residues-rich tracts occupy residues 207 to 225 (SHAT…NSGD) and 233 to 255 (TRST…SVTA). Position 262 is a phosphoserine (serine 262). The span at 264-273 (EILSSVGKEN) shows a compositional bias: polar residues. Low complexity-rich tracts occupy residues 274 to 300 (TSPT…SAGG) and 311 to 322 (PATPTSSTTSAS). Residues 348-359 (TPTSPTGQQNYV) are compositionally biased toward polar residues. Residues 360-378 (NGNAQNGSTSGNGSGQAAQ) are compositionally biased toward low complexity. Positions 379–392 (PQSASNGWTQEDAA) are enriched in polar residues. Residues 393–409 (TTTSPSTTTSPPRHSQS) are compositionally biased toward low complexity. Threonine 412 carries the phosphothreonine modification. Phosphoserine is present on serine 416. Over residues 417–439 (PPASVTPSANGNVHSPNANSTPA) the composition is skewed to polar residues. The span at 480 to 494 (RNGGTSGGGGGGGSG) shows a compositional bias: gly residues. WW domains are found at residues 513-546 (LDLP…DPRI) and 561-594 (GPLP…DPRL). The interaction with MAD stretch occupies residues 513–602 (LDLPPGYEMR…RLSGSILQMI (90 aa)). 2 stretches are compositionally biased toward low complexity: residues 608–617 (PPTSAANAGT) and 624–656 (TPAT…TNPP). The interval 608–661 (PPTSAANAGTPAPPSATPATPSAAAAVPPQATPASNATPTTLTTTTNPPHRIVP) is disordered. The 339-residue stretch at 723-1061 (RAKDMRKRLM…VEETCGFAVE (339 aa)) folds into the HECT domain. Cysteine 1029 functions as the Glycyl thioester intermediate in the catalytic mechanism.

As to quaternary structure, interacts with phosphorylated MAD.

It carries out the reaction S-ubiquitinyl-[E2 ubiquitin-conjugating enzyme]-L-cysteine + [acceptor protein]-L-lysine = [E2 ubiquitin-conjugating enzyme]-L-cysteine + N(6)-ubiquitinyl-[acceptor protein]-L-lysine.. The protein operates within protein modification; protein ubiquitination. Functionally, E3 ubiquitin-protein ligase which accepts ubiquitin from an E2 ubiquitin-conjugating enzyme in the form of a thioester and then directly transfers the ubiquitin to targeted substrates. Down-regulates Dpp signaling after gastrulation by promoting MAD ubiquitination and subsequent degradation. The polypeptide is E3 ubiquitin-protein ligase Smurf1 (Drosophila melanogaster (Fruit fly)).